The sequence spans 331 residues: C4-dicarboxylate-binding periplasmic protein DctP (331 aa).

The N-terminal stretch at 1–23 (MLKHTAKALVCALSLTVAGIVQA) is a signal peptide.

Belongs to the bacterial solute-binding protein 7 family. As to quaternary structure, the complex comprises the extracytoplasmic solute receptor protein DctP, and the two transmembrane proteins DctQ and DctM.

The protein localises to the periplasm. In terms of biological role, part of the tripartite ATP-independent periplasmic (TRAP) transport system DctPQM involved in C4-dicarboxylates uptake. This Pseudomonas aeruginosa (strain ATCC 15692 / DSM 22644 / CIP 104116 / JCM 14847 / LMG 12228 / 1C / PRS 101 / PAO1) protein is C4-dicarboxylate-binding periplasmic protein DctP.